Here is a 394-residue protein sequence, read N- to C-terminus: uncharacterized protein (394 aa).

This is an uncharacterized protein from Bacillus subtilis (strain 168).